Here is a 184-residue protein sequence, read N- to C-terminus: UPF0398 protein BALH_1408 (184 aa).

The protein belongs to the UPF0398 family.

In Bacillus thuringiensis (strain Al Hakam), this protein is UPF0398 protein BALH_1408.